The primary structure comprises 422 residues: Osteomodulin (422 aa).

The signal sequence occupies residues 1–20 (MGFSSLVCVLFFFLGVKVYC). Residues 21 to 27 (QYESYQW) constitute a propeptide that is removed on maturation. Sulfotyrosine occurs at positions 22, 25, 31, 39, 51, and 77. The region spanning 53–91 (APFHQHTLGCASECFCPPNFPSSMYCDNRKLKTIPNIPA) is the LRRNT domain. LRR repeat units lie at residues 92 to 113 (HIQQ…SFIN), 116 to 129 (HLKE…KIKS), 142 to 164 (NLLQ…PKSL), 165 to 184 (ERIF…AVNG), 187 to 207 (NLTM…QEKV), 213 to 233 (KLMQ…GLPS), 234 to 255 (SLMY…YFNK), 258 to 280 (KLHA…FNLS), 281 to 294 (NLIE…KLKQ), 301 to 322 (NLEH…VMCP), and 331 to 353 (HLTH…IFLC). Asparagine 113 and asparagine 121 each carry an N-linked (GlcNAc...) asparagine glycan. An N-linked (GlcNAc...) asparagine glycan is attached at asparagine 187. 2 N-linked (GlcNAc...) asparagine glycosylation sites follow: asparagine 242 and asparagine 278. An N-linked (GlcNAc...) asparagine glycan is attached at asparagine 316. Cysteine 321 and cysteine 353 are joined by a disulfide. Residues 385–422 (DDGDSEDHDDHHEGPEEEGTEENIDAHYYGSQEWQETI) form a disordered region. Sulfotyrosine is present on residues tyrosine 412 and tyrosine 413.

It belongs to the small leucine-rich proteoglycan (SLRP) family. SLRP class II subfamily. In terms of assembly, binds the alpha(V)beta(3)-integrin. The N-terminus is blocked. In terms of processing, glycosylated; contains keratan sulfate. Post-translationally, sulfated on tyrosine residue(s). In terms of tissue distribution, bone specific (at protein level).

The protein localises to the secreted. It is found in the extracellular space. The protein resides in the extracellular matrix. In terms of biological role, may be implicated in biomineralization processes. Has a function in binding of osteoblasts via the alpha(V)beta(3)-integrin. In Bos taurus (Bovine), this protein is Osteomodulin (OMD).